The following is a 264-amino-acid chain: Glutamate racemase (264 aa).

Residues 10 to 11 (DS) and 42 to 43 (YG) each bind substrate. Residue cysteine 73 is the Proton donor/acceptor of the active site. 74–75 (NT) lines the substrate pocket. The active-site Proton donor/acceptor is cysteine 183. Residue 184-185 (TH) coordinates substrate.

The protein belongs to the aspartate/glutamate racemases family.

It catalyses the reaction L-glutamate = D-glutamate. The protein operates within cell wall biogenesis; peptidoglycan biosynthesis. Its function is as follows. Provides the (R)-glutamate required for cell wall biosynthesis. In Streptococcus pyogenes serotype M2 (strain MGAS10270), this protein is Glutamate racemase.